We begin with the raw amino-acid sequence, 128 residues long: MKRREAREKALQALFQIELNEMSLDQAIKNIMEDEQDDYMEKLVEGVMANKAEIDAIIEPNLDNWRIDRLSKVDLSLLRLSVYEIKYLDDVPNRVSLNESIEIAKIYSDEKSSKFINGVLANIAPEDK.

The protein belongs to the NusB family.

Functionally, involved in transcription antitermination. Required for transcription of ribosomal RNA (rRNA) genes. Binds specifically to the boxA antiterminator sequence of the ribosomal RNA (rrn) operons. This chain is Transcription antitermination protein NusB, found in Listeria monocytogenes serotype 4a (strain HCC23).